The primary structure comprises 306 residues: Putative S-adenosyl-L-methionine-dependent methyltransferase FRAAL5401 (306 aa).

Residues Asp-126 and 155-156 each bind S-adenosyl-L-methionine; that span reads DL. The tract at residues 201–225 is disordered; that stretch reads LSAPESRVATENRPNPKPGDEDRTK.

This sequence belongs to the UPF0677 family.

Functionally, exhibits S-adenosyl-L-methionine-dependent methyltransferase activity. This chain is Putative S-adenosyl-L-methionine-dependent methyltransferase FRAAL5401, found in Frankia alni (strain DSM 45986 / CECT 9034 / ACN14a).